A 213-amino-acid chain; its full sequence is Uridine kinase (213 aa).

ATP is bound at residue 15–22; it reads GASASGKS.

This sequence belongs to the uridine kinase family.

The protein localises to the cytoplasm. The catalysed reaction is uridine + ATP = UMP + ADP + H(+). The enzyme catalyses cytidine + ATP = CMP + ADP + H(+). The protein operates within pyrimidine metabolism; CTP biosynthesis via salvage pathway; CTP from cytidine: step 1/3. It participates in pyrimidine metabolism; UMP biosynthesis via salvage pathway; UMP from uridine: step 1/1. The sequence is that of Uridine kinase from Salmonella newport (strain SL254).